A 494-amino-acid polypeptide reads, in one-letter code: Neuronal pentraxin receptor (494 aa).

At 1–2 (MK) the chain is on the cytoplasmic side. A helical; Signal-anchor for type II membrane protein membrane pass occupies residues 3–23 (FLAVLLAAGMLAFLGAVICII). Residues 24–494 (ASVPLAASPA…FDVCKRRAKA (471 aa)) lie on the Extracellular side of the membrane. Residues 37-80 (PGGTDNASAASAAGAPGPQRSLSALQGAGGSAGPSVLPGEPAAS) are disordered. N42 carries an N-linked (GlcNAc...) asparagine glycan. 2 stretches are compositionally biased toward low complexity: residues 43 to 62 (ASAA…SALQ) and 69 to 80 (GPSVLPGEPAAS). Residue N211 is glycosylated (N-linked (GlcNAc...) asparagine). Residues 286 to 488 (DAFKVSIPIR…GAKKAAFDVC (203 aa)) form the Pentraxin (PTX) domain. C316 and C377 are oxidised to a cystine. Residues N341, E419, Q420, D421, and Q431 each coordinate Ca(2+). N457 carries N-linked (GlcNAc...) asparagine glycosylation.

Interacts with KLHL2. Heteropentamer with NPTX1 and/or NPTX2. Also binds taipoxin-associated calcium-binding protein 49 (TCBP49/RCN2). Ca(2+) serves as cofactor. In terms of processing, N-glycosylated. Ubiquitinated by a cullin-RING-based BCR (BTB-CUL3-RBX1) E3 ubiquitin-protein ligase complex containing KLHL2. In terms of tissue distribution, brain specific.

Its subcellular location is the membrane. Functionally, may be involved in mediating uptake of synaptic material during synapse remodeling or in mediating the synaptic clustering of AMPA glutamate receptors at a subset of excitatory synapses. This Rattus norvegicus (Rat) protein is Neuronal pentraxin receptor (Nptxr).